Here is a 353-residue protein sequence, read N- to C-terminus: Uroporphyrinogen decarboxylase (353 aa).

Substrate is bound by residues 27–31 (RQAGR), phenylalanine 46, aspartate 76, tyrosine 152, serine 207, and histidine 321.

Belongs to the uroporphyrinogen decarboxylase family. As to quaternary structure, homodimer.

The protein localises to the cytoplasm. It catalyses the reaction uroporphyrinogen III + 4 H(+) = coproporphyrinogen III + 4 CO2. Its pathway is porphyrin-containing compound metabolism; protoporphyrin-IX biosynthesis; coproporphyrinogen-III from 5-aminolevulinate: step 4/4. Catalyzes the decarboxylation of four acetate groups of uroporphyrinogen-III to yield coproporphyrinogen-III. This is Uroporphyrinogen decarboxylase from Listeria monocytogenes serotype 4b (strain F2365).